Reading from the N-terminus, the 363-residue chain is tRNA-specific 2-thiouridylase MnmA (363 aa).

ATP contacts are provided by residues 8–15 (AMSGGVDS) and Leu34. The active-site Nucleophile is Cys103. A disulfide bond links Cys103 and Cys195. ATP is bound at residue Gly127. The interaction with tRNA stretch occupies residues 145-147 (KDQ). Catalysis depends on Cys195, which acts as the Cysteine persulfide intermediate.

It belongs to the MnmA/TRMU family.

It is found in the cytoplasm. It carries out the reaction S-sulfanyl-L-cysteinyl-[protein] + uridine(34) in tRNA + AH2 + ATP = 2-thiouridine(34) in tRNA + L-cysteinyl-[protein] + A + AMP + diphosphate + H(+). Catalyzes the 2-thiolation of uridine at the wobble position (U34) of tRNA, leading to the formation of s(2)U34. This is tRNA-specific 2-thiouridylase MnmA from Thermobifida fusca (strain YX).